Reading from the N-terminus, the 245-residue chain is Sugar fermentation stimulation protein homolog (245 aa).

The protein belongs to the SfsA family.

The sequence is that of Sugar fermentation stimulation protein homolog from Rhodospirillum rubrum (strain ATCC 11170 / ATH 1.1.1 / DSM 467 / LMG 4362 / NCIMB 8255 / S1).